The sequence spans 132 residues: Phosphoribosyl-ATP pyrophosphatase (132 aa).

It belongs to the PRA-PH family.

Its subcellular location is the cytoplasm. It catalyses the reaction 1-(5-phospho-beta-D-ribosyl)-ATP + H2O = 1-(5-phospho-beta-D-ribosyl)-5'-AMP + diphosphate + H(+). The protein operates within amino-acid biosynthesis; L-histidine biosynthesis; L-histidine from 5-phospho-alpha-D-ribose 1-diphosphate: step 2/9. This chain is Phosphoribosyl-ATP pyrophosphatase, found in Acidovorax sp. (strain JS42).